The primary structure comprises 138 residues: Ribulose bisphosphate carboxylase small subunit (138 aa).

The protein belongs to the RuBisCO small chain family. Heterohexadecamer of 8 large and 8 small subunits.

Its subcellular location is the plastid. The protein localises to the chloroplast. In terms of biological role, ruBisCO catalyzes two reactions: the carboxylation of D-ribulose 1,5-bisphosphate, the primary event in carbon dioxide fixation, as well as the oxidative fragmentation of the pentose substrate in the photorespiration process. Both reactions occur simultaneously and in competition at the same active site. Although the small subunit is not catalytic it is essential for maximal activity. This chain is Ribulose bisphosphate carboxylase small subunit, found in Antithamnion sp. (Red alga).